A 658-amino-acid chain; its full sequence is Pro-secreted protein ORF2 (658 aa).

The N-terminal stretch at 1–19 (MRSRALLFLLFVLLPMLPA) is a signal peptide. A disordered region spans residues 62–124 (SDIPAAAGTG…PDTAPVPDAD (63 aa)). Residues 91–122 (RPAASTRRRPAPAGASPLTAVAPAPDTAPVPD) are compositionally biased toward low complexity. Asparagine 135 and asparagine 308 each carry an N-linked (GlcNAc...) asparagine; by host glycan. The particle formation stretch occupies residues 366–392 (IALTLFNLADTLLGGLPTELISSAGGQ). The N-linked (GlcNAc...) asparagine; by host glycan is linked to asparagine 560. An oligomerization region spans residues 583–608 (TTNLGSGPVSVSAVGVLAPHSALAAL).

It belongs to the hepevirus capsid protein family. Homodimer. In terms of assembly, self-assembles to form the capsid. The capsid is dominated by dimers that define the 30 morphological units. Interacts with phosphorylated protein ORF3. Interacts with host TMEM134. Interacts with host ASGR1 and ASGR2; these interactions facilitate infection of host hepatocytes. Cleaved by host protease in the N-terminus. Post-translationally, N-glycosylated. In terms of processing, not N-glycosylated. The C-terminus of the capsid protein ORF2 is truncated in non-enveloped virions shedded in feces, probably due to host proteases.

It is found in the secreted. Its subcellular location is the virion. The protein localises to the host cytoplasm. The protein resides in the host endoplasmic reticulum. It localises to the host Golgi apparatus. It is found in the host cell surface. Its subcellular location is the host nucleus. Its function is as follows. Plays a role in the inhibition of host antibody-mediated neutralization without blocking viral cell entry. Functionally, forms an icosahedral capsid with a T=1 symmetry and a 34 nm diameter. The capsid is composed of 60 copies linked to each other. Binds to the 5' end of the genomic RNA to mediate genome encapsidation. Binds to heparin surface proteoglycans (HSPGs) to mediate viral entry. Additionally, the interactions with host ASGR1 and ASGR2 facilitate viral infection of hepatocytes. Inhibits IFN production by blocking host TBK1-induced IRF3 phosphorylation. The nuclear form probably modulates host gene expression. The sequence is that of Pro-secreted protein ORF2 from Bandicota bengalensis (lesser bandicoot rat).